The chain runs to 351 residues: Serine/threonine-protein kinase mos (351 aa).

In terms of domain architecture, Protein kinase spans 71–340 (FSIDGVIGSG…ERRTDDTENL (270 aa)). Residues 77–85 (IGSGGFGSV) and lysine 98 contribute to the ATP site. The active-site Proton acceptor is aspartate 194.

The protein belongs to the protein kinase superfamily. Ser/Thr protein kinase family.

The catalysed reaction is L-seryl-[protein] + ATP = O-phospho-L-seryl-[protein] + ADP + H(+). The enzyme catalyses L-threonyl-[protein] + ATP = O-phospho-L-threonyl-[protein] + ADP + H(+). Functionally, suppresses the mitotic cell cycle in oocytes, forcing them to undergo meiosis II to produce haploid gametes. Acts as a MAPK kinase kinase (MAP3K) that acts upstream of MAP kinase in oocytes. The polypeptide is Serine/threonine-protein kinase mos (Patiria pectinifera (Starfish)).